A 369-amino-acid chain; its full sequence is MPVLTTDAESETGIPKSLSNEPPSETMEEIEHTCPQPRLTLTAPAPFADESSCQCQAPHEKLTVAQARLGTPVDRPVRVYADGIFDLFHSGHARALMQAKTLFPNSYLLVGVCSDDLTHKFKGFTVMNEAERYEALRHCRYVDEVIRDAPWTLTPEFLEKHKIDFVAHDDIPYSSAGSDDVYKHIKEAGMFVPTQRTEGISTSDIITRIVRDYDVYARRNLQRGYTAKELNVSFINEKKYRFQNQVDKMKEKVKNVEERSKEFVNRVEEKSHDLIQKWEEKSREFIGNFLELFGPDGAWKQMFQERSSRMLQALSPKQSPVSSPTRSRSPSRSPSPTFSWLPNKTSPPSSPKAASASISSMSEGDEDEK.

Residues 1–27 form a disordered region; it reads MPVLTTDAESETGIPKSLSNEPPSETM. CTP-binding residues include Ile-84, Phe-85, His-92, and Lys-122. Residues Lys-122 and Trp-151 each contribute to the phosphocholine site. Residues His-168, Asp-169, Tyr-173, Gln-195, Arg-196, Thr-197, and Ile-200 each contribute to the CTP site. The segment at 309 to 369 is disordered; sequence RMLQALSPKQ…SMSEGDEDEK (61 aa). Ser-315, Ser-319, Ser-322, Ser-323, Ser-329, Ser-331, and Ser-335 each carry phosphoserine. The segment covering 319–339 has biased composition (low complexity); sequence SPVSSPTRSRSPSRSPSPTFS. Thr-345 bears the Phosphothreonine mark. 6 positions are modified to phosphoserine: Ser-346, Ser-349, Ser-350, Ser-355, Ser-360, and Ser-362. Residues 351 to 362 show a composition bias toward low complexity; the sequence is PKAASASISSMS.

It belongs to the cytidylyltransferase family. As to quaternary structure, homodimer. Highly expressed in brain (at protein level). Expressed in liver (at protein level). Expressed at lower levels in lung and gonads. In terms of tissue distribution, expressed in brain (at protein level). Expressed at lower levels in lung and gonads.

The protein localises to the endoplasmic reticulum. Its subcellular location is the cytoplasm. The catalysed reaction is phosphocholine + CTP + H(+) = CDP-choline + diphosphate. The protein operates within phospholipid metabolism; phosphatidylcholine biosynthesis; phosphatidylcholine from phosphocholine: step 1/2. Functionally, catalyzes the key rate-limiting step in the CDP-choline pathway for phosphatidylcholine biosynthesis. Plays an important role in ovary maturation and the maintenance of sperm production. Catalyzes the key rate-limiting step in the CDP-choline pathway for phosphatidylcholine biosynthesis. This chain is Choline-phosphate cytidylyltransferase B (Pcyt1b), found in Mus musculus (Mouse).